Reading from the N-terminus, the 364-residue chain is MSNSLGKLFQITSFGESHGDCVGVVIDGVPAGLAINVDEIQIEVDKRKSGAKAHTTPRREDDRIEIFSGIFNNFTTGAPICLVIWNKNIDSSEYERTRSKIRPGHADFTGFMKYGGFNDYRGGGRFSGRITAGHVMAGAIARKLISTIGIEVIGYTAELGGITAKLPKHKDIRQNISQSDVNCPDLAASKQMVALIQQAAEEGDSLGGVVECIGLNLPVGLGEPVFDTLEGELAKAIFAIPAVKGVEFGAGFGASRLRGSKNNDPFNIQSDQIRTTSNNCGGILGGISDGMPLHIRVAVKPTPSISLSQPTVNLDTMTNTSLEIRGRHDTCIVPRAVSVVEAMTCIVLADLALRAGIIPRVIKQ.

An NADP(+)-binding site is contributed by Arg47. FMN-binding positions include 125 to 127 (RFS), Gly285, 300 to 304 (KPTPS), and Arg327.

The protein belongs to the chorismate synthase family. In terms of assembly, homotetramer. Requires FMNH2 as cofactor.

It catalyses the reaction 5-O-(1-carboxyvinyl)-3-phosphoshikimate = chorismate + phosphate. It functions in the pathway metabolic intermediate biosynthesis; chorismate biosynthesis; chorismate from D-erythrose 4-phosphate and phosphoenolpyruvate: step 7/7. Functionally, catalyzes the anti-1,4-elimination of the C-3 phosphate and the C-6 proR hydrogen from 5-enolpyruvylshikimate-3-phosphate (EPSP) to yield chorismate, which is the branch point compound that serves as the starting substrate for the three terminal pathways of aromatic amino acid biosynthesis. This reaction introduces a second double bond into the aromatic ring system. The protein is Chorismate synthase of Dehalococcoides mccartyi (strain ATCC BAA-2100 / JCM 16839 / KCTC 5957 / BAV1).